The sequence spans 95 residues: Aspartyl/glutamyl-tRNA(Asn/Gln) amidotransferase subunit C (95 aa).

Belongs to the GatC family. Heterotrimer of A, B and C subunits.

It catalyses the reaction L-glutamyl-tRNA(Gln) + L-glutamine + ATP + H2O = L-glutaminyl-tRNA(Gln) + L-glutamate + ADP + phosphate + H(+). The enzyme catalyses L-aspartyl-tRNA(Asn) + L-glutamine + ATP + H2O = L-asparaginyl-tRNA(Asn) + L-glutamate + ADP + phosphate + 2 H(+). Functionally, allows the formation of correctly charged Asn-tRNA(Asn) or Gln-tRNA(Gln) through the transamidation of misacylated Asp-tRNA(Asn) or Glu-tRNA(Gln) in organisms which lack either or both of asparaginyl-tRNA or glutaminyl-tRNA synthetases. The reaction takes place in the presence of glutamine and ATP through an activated phospho-Asp-tRNA(Asn) or phospho-Glu-tRNA(Gln). In Caldanaerobacter subterraneus subsp. tengcongensis (strain DSM 15242 / JCM 11007 / NBRC 100824 / MB4) (Thermoanaerobacter tengcongensis), this protein is Aspartyl/glutamyl-tRNA(Asn/Gln) amidotransferase subunit C.